A 749-amino-acid polypeptide reads, in one-letter code: uncharacterized protein (749 aa).

The 181-residue stretch at 63–243 (FQYVQKGESI…QLTGKPMRLV (181 aa)) folds into the Helicase ATP-binding domain. 76–83 (TPTASGKT) contacts ATP. The DEVH box motif lies at 185–188 (DELH). The 155-residue stretch at 276–430 (EVNELAKEFL…SARINPENLI (155 aa)) folds into the Helicase C-terminal domain.

It belongs to the helicase family.

This is an uncharacterized protein from Bacillus subtilis (strain 168).